A 650-amino-acid chain; its full sequence is DNA gyrase subunit B (650 aa).

A compositionally biased stretch (basic and acidic residues) spans 400 to 414 (RRSQEARELTRRKSP). Residues 400 to 422 (RRSQEARELTRRKSPFDSGSLPG) are disordered. The Toprim domain maps to 435–549 (SELYIVEGDS…QGNIFIAQPP (115 aa)). Residues E441, D514, and D516 each coordinate Mg(2+).

This sequence belongs to the type II topoisomerase GyrB family. In terms of assembly, heterotetramer, composed of two GyrA and two GyrB chains. In the heterotetramer, GyrA contains the active site tyrosine that forms a transient covalent intermediate with DNA, while GyrB binds cofactors and catalyzes ATP hydrolysis. Requires Mg(2+) as cofactor. Mn(2+) is required as a cofactor. Ca(2+) serves as cofactor.

Its subcellular location is the cytoplasm. The enzyme catalyses ATP-dependent breakage, passage and rejoining of double-stranded DNA.. Functionally, a type II topoisomerase that negatively supercoils closed circular double-stranded (ds) DNA in an ATP-dependent manner to modulate DNA topology and maintain chromosomes in an underwound state. Negative supercoiling favors strand separation, and DNA replication, transcription, recombination and repair, all of which involve strand separation. Also able to catalyze the interconversion of other topological isomers of dsDNA rings, including catenanes and knotted rings. Type II topoisomerases break and join 2 DNA strands simultaneously in an ATP-dependent manner. The sequence is that of DNA gyrase subunit B from Mycoplasma genitalium (strain ATCC 33530 / DSM 19775 / NCTC 10195 / G37) (Mycoplasmoides genitalium).